The chain runs to 44 residues: Photosystem I reaction center subunit IX (44 aa).

A helical transmembrane segment spans residues 7–27; it reads YLSVAPVVSTIWFGALAGLLI.

Belongs to the PsaJ family.

The protein localises to the plastid. Its subcellular location is the chloroplast thylakoid membrane. In terms of biological role, may help in the organization of the PsaE and PsaF subunits. This is Photosystem I reaction center subunit IX from Cucumis sativus (Cucumber).